The sequence spans 600 residues: UvrABC system protein C (600 aa).

Positions 15-100 (NSAGVYQYFN…IKQLHPKYNI (86 aa)) constitute a GIY-YIG domain. Residues 203 to 238 (SILIKNLEKQMLVLAQNENYEEAAKVRDQIVTIKDL) form the UVR domain.

Belongs to the UvrC family. Interacts with UvrB in an incision complex.

Its subcellular location is the cytoplasm. In terms of biological role, the UvrABC repair system catalyzes the recognition and processing of DNA lesions. UvrC both incises the 5' and 3' sides of the lesion. The N-terminal half is responsible for the 3' incision and the C-terminal half is responsible for the 5' incision. This is UvrABC system protein C from Campylobacter jejuni subsp. jejuni serotype O:6 (strain 81116 / NCTC 11828).